The following is a 325-amino-acid chain: UPF0285 protein MM_0679 (325 aa).

This sequence belongs to the UPF0285 family.

In Methanosarcina mazei (strain ATCC BAA-159 / DSM 3647 / Goe1 / Go1 / JCM 11833 / OCM 88) (Methanosarcina frisia), this protein is UPF0285 protein MM_0679.